Consider the following 415-residue polypeptide: UDP-N-acetylmuramoylalanine--D-glutamate ligase (415 aa).

91-97 (GTDGKST) is a binding site for ATP.

It belongs to the MurCDEF family.

The protein localises to the cytoplasm. The catalysed reaction is UDP-N-acetyl-alpha-D-muramoyl-L-alanine + D-glutamate + ATP = UDP-N-acetyl-alpha-D-muramoyl-L-alanyl-D-glutamate + ADP + phosphate + H(+). Its pathway is cell wall biogenesis; peptidoglycan biosynthesis. Its function is as follows. Cell wall formation. Catalyzes the addition of glutamate to the nucleotide precursor UDP-N-acetylmuramoyl-L-alanine (UMA). The protein is UDP-N-acetylmuramoylalanine--D-glutamate ligase of Aquifex aeolicus (strain VF5).